A 214-amino-acid chain; its full sequence is Pyridoxine/pyridoxamine 5'-phosphate oxidase (214 aa).

Substrate-binding positions include 9-12 and lysine 68; that span reads RRSY. FMN contacts are provided by residues 63–68, 78–79, lysine 85, and glutamine 107; these read RVVLLK and YT. Positions 125, 129, and 133 each coordinate substrate. FMN contacts are provided by residues 142-143 and tryptophan 187; that span reads QS. 193-195 is a binding site for substrate; that stretch reads RLH. FMN is bound at residue arginine 197.

The protein belongs to the pyridoxamine 5'-phosphate oxidase family. As to quaternary structure, homodimer. Requires FMN as cofactor.

It catalyses the reaction pyridoxamine 5'-phosphate + O2 + H2O = pyridoxal 5'-phosphate + H2O2 + NH4(+). It carries out the reaction pyridoxine 5'-phosphate + O2 = pyridoxal 5'-phosphate + H2O2. Its pathway is cofactor metabolism; pyridoxal 5'-phosphate salvage; pyridoxal 5'-phosphate from pyridoxamine 5'-phosphate: step 1/1. It functions in the pathway cofactor metabolism; pyridoxal 5'-phosphate salvage; pyridoxal 5'-phosphate from pyridoxine 5'-phosphate: step 1/1. Catalyzes the oxidation of either pyridoxine 5'-phosphate (PNP) or pyridoxamine 5'-phosphate (PMP) into pyridoxal 5'-phosphate (PLP). In Christiangramia forsetii (strain DSM 17595 / CGMCC 1.15422 / KT0803) (Gramella forsetii), this protein is Pyridoxine/pyridoxamine 5'-phosphate oxidase.